Here is an 845-residue protein sequence, read N- to C-terminus: BLOC-2 complex member HPS5 homolog (845 aa).

The interval 239 to 268 (PTEEDLEDAKSMEGSDDNDNDQRSSPSGVK) is disordered.

It belongs to the HPS5 family.

Its function is as follows. Has a role in the biogenesis of eye pigment granules. Eye pigment granules are specialized forms of late endosomes or lysosomes. Biogenesis of pigment granules in the eye requires molecular components required for protein delivery to lysosomes. This is BLOC-2 complex member HPS5 homolog from Aedes aegypti (Yellowfever mosquito).